We begin with the raw amino-acid sequence, 185 residues long: MILVIGLGNPGTEYQYTRHNIGFIAIERIASKYHLSFSIKKKFNCEIAEAVIDRQKIIFIKPTTYMNLSGKSVILVKTYYNIKYEKVFVIHDDIDLEIGRIKFKTGGGNGGHNGLKSIDVVIGNHYNRIRIGIGRPKNNHDVADYVLNNFSESEYKIAMQSIDNIANNFGLILEHKLAEFTNKIV.

TRNA is bound at residue tyrosine 14. The Proton acceptor role is filled by histidine 19. Residues tyrosine 65, asparagine 67, and asparagine 113 each coordinate tRNA.

Belongs to the PTH family. As to quaternary structure, monomer.

Its subcellular location is the cytoplasm. The enzyme catalyses an N-acyl-L-alpha-aminoacyl-tRNA + H2O = an N-acyl-L-amino acid + a tRNA + H(+). Hydrolyzes ribosome-free peptidyl-tRNAs (with 1 or more amino acids incorporated), which drop off the ribosome during protein synthesis, or as a result of ribosome stalling. In terms of biological role, catalyzes the release of premature peptidyl moieties from peptidyl-tRNA molecules trapped in stalled 50S ribosomal subunits, and thus maintains levels of free tRNAs and 50S ribosomes. The sequence is that of Peptidyl-tRNA hydrolase from Rickettsia prowazekii (strain Madrid E).